Reading from the N-terminus, the 156-residue chain is Cytochrome c-type biogenesis protein CcmE (156 aa).

The Cytoplasmic segment spans residues 1-7; sequence MTRRQRR. A helical; Signal-anchor for type II membrane protein membrane pass occupies residues 8–28; it reads LGILLAALVCAGAATALTLNA. Over 29 to 156 the chain is Periplasmic; it reads FRSNLVFFFS…AKESARSASR (128 aa). 2 residues coordinate heme: His-123 and Tyr-127.

Belongs to the CcmE/CycJ family.

The protein localises to the cell inner membrane. Functionally, heme chaperone required for the biogenesis of c-type cytochromes. Transiently binds heme delivered by CcmC and transfers the heme to apo-cytochromes in a process facilitated by CcmF and CcmH. The chain is Cytochrome c-type biogenesis protein CcmE from Ralstonia pickettii (strain 12J).